A 253-amino-acid polypeptide reads, in one-letter code: 3-dehydroquinate dehydratase (253 aa).

Residues 46-48 and Arg-82 each bind 3-dehydroquinate; that span reads EWR. Residue His-143 is the Proton donor/acceptor of the active site. Lys-170 serves as the catalytic Schiff-base intermediate with substrate. Residues Arg-213, Ser-232, and Gln-236 each contribute to the 3-dehydroquinate site.

This sequence belongs to the type-I 3-dehydroquinase family. In terms of assembly, homodimer.

The enzyme catalyses 3-dehydroquinate = 3-dehydroshikimate + H2O. It functions in the pathway metabolic intermediate biosynthesis; chorismate biosynthesis; chorismate from D-erythrose 4-phosphate and phosphoenolpyruvate: step 3/7. Its function is as follows. Involved in the third step of the chorismate pathway, which leads to the biosynthesis of aromatic amino acids. Catalyzes the cis-dehydration of 3-dehydroquinate (DHQ) and introduces the first double bond of the aromatic ring to yield 3-dehydroshikimate. The polypeptide is 3-dehydroquinate dehydratase (Bacillus velezensis (strain DSM 23117 / BGSC 10A6 / LMG 26770 / FZB42) (Bacillus amyloliquefaciens subsp. plantarum)).